We begin with the raw amino-acid sequence, 603 residues long: MESSALLTAGVLFLFVAVVAVPIAARLGIGAVLGYLIAGIAIGPWGLGFIRDVEAILHFSELGVVFLMFIIGLELNPGKLWTLRRSIFGVGAAQVGLSALILGGALYLTDFSWQSALIGGVGLAMSSTAMALQLMREKGMNRNESGQLGFSVLLFQDLAVIPALALIPILAGVQGDFGDWERIGLKVAAFLGMLIGGRYLVRPLFRFIAASGVREVFTAAALLLVLGSALFMEALGLSMALGTFIAGILLAESEYRHELEIAIEPFKGLLLGLFFISVGMALNLGILYTHIVKIMIAVLVLVAVKGAVLYFLARINRMRRSERLQFAGVLSQGGEFAFVLFSAAASFNVLKGEQLPLLLVTVTLSMMTTPLLMQVIDRVLARRYNVQDVPDEKPYVEDDEPQVIVVGFGRFGQVISRLLMANKMRITVLERDISAVSLMRSYGYKVYYGDATELELLRSAGADKARSIVITCNAPEDTMEIVHLCQQHFPNLEILARARGRVEAHELLQTGVRHFSRETFSSALELGRKTLVTLGMHPHQAMRAQQHFRRLDMRMLRELMPQLTGDVAQISRVKEARRELEDIFQREMLRERRRPSVWDEDDE.

13 consecutive transmembrane segments (helical) span residues 5–25, 29–49, 53–73, 87–107, 115–135, 152–172, 180–202, 207–227, 230–250, 268–288, 291–311, 326–346, and 356–376; these read ALLT…PIAA, IGAV…GLGF, VEAI…IIGL, IFGV…GALY, SALI…LQLM, VLLF…ILAG, WERI…YLVR, FIAA…LVLG, LFME…GILL, GLLL…GILY, IVKI…VLYF, FAGV…AAAS, and PLLL…MQVI. One can recognise an RCK N-terminal domain in the interval 400–521; sequence EPQVIVVGFG…VRHFSRETFS (122 aa).

It belongs to the monovalent cation:proton antiporter 2 (CPA2) transporter (TC 2.A.37) family. KefB subfamily. In terms of assembly, interacts with the regulatory subunit KefG.

The protein resides in the cell inner membrane. Its function is as follows. Pore-forming subunit of a potassium efflux system that confers protection against electrophiles. Catalyzes K(+)/H(+) antiport. This Pectobacterium atrosepticum (strain SCRI 1043 / ATCC BAA-672) (Erwinia carotovora subsp. atroseptica) protein is Glutathione-regulated potassium-efflux system protein KefB.